A 162-amino-acid polypeptide reads, in one-letter code: Ribosome maturation factor RimM (162 aa).

Residues 91–162 (DGSFYIDDLI…LIDVVIIEGM (72 aa)) enclose the PRC barrel domain.

Belongs to the RimM family. As to quaternary structure, binds ribosomal protein uS19.

It is found in the cytoplasm. Its function is as follows. An accessory protein needed during the final step in the assembly of 30S ribosomal subunit, possibly for assembly of the head region. Essential for efficient processing of 16S rRNA. May be needed both before and after RbfA during the maturation of 16S rRNA. It has affinity for free ribosomal 30S subunits but not for 70S ribosomes. The sequence is that of Ribosome maturation factor RimM from Finegoldia magna (strain ATCC 29328 / DSM 20472 / WAL 2508) (Peptostreptococcus magnus).